A 370-amino-acid polypeptide reads, in one-letter code: Proline-rich protein 5-like (370 aa).

At serine 28 the chain carries Phosphoserine. The tract at residues 327-370 (PTFPPPHRQCSSEPSILDSPDEMELEDVASGSQEDSELNCASLS) is disordered.

This sequence belongs to the PROTOR family. Interacts with the mammalian target of rapamycin complex 2 (mTORC2) which contains MTOR, MLST8, PRR5, RICTOR, MAPKAP1 and DEPTOR. Interacts with RFFL. Interacts (via C-terminus) with ZFP36 (via C-terminus); this interaction may accelerate ZFP36-mediated mRNA decay during stress. Interacts with RICTOR. Ubiquitinated. Ubiquitination by RFFL promotes proteasomal degradation of PRR5L thereby modifying the substrate-specific activity of the mTORC2 complex. Ubiquitination by RFFL is stimulated by LPA/lysophosphatidic acid.

Associates with the mTORC2 complex that regulates cellular processes including survival and organization of the cytoskeleton. Regulates the activity of the mTORC2 complex in a substrate-specific manner preventing for instance the specific phosphorylation of PKCs and thereby controlling cell migration. Plays a role in the stimulation of ZFP36-mediated mRNA decay of several ZFP36-associated mRNAs, such as TNF-alpha and GM-CSF, in response to stress. Required for ZFP36 localization to cytoplasmic stress granule (SG) and P-body (PB) in response to stress. The protein is Proline-rich protein 5-like (Prr5l) of Rattus norvegicus (Rat).